We begin with the raw amino-acid sequence, 295 residues long: Glutamate-binding protein GluB (295 aa).

Residues 1 to 26 (MSAKRTFTRIGAILGATALAGVTLTA) form the signal peptide. The N-palmitoyl cysteine moiety is linked to residue Cys-27. Cys-27 carries S-diacylglycerol cysteine lipidation.

Belongs to the bacterial solute-binding protein 3 family. In terms of assembly, the complex is composed of two ATP-binding proteins (GluA), two transmembrane proteins (GluC and GluD) and a solute-binding protein (GluB).

Its subcellular location is the cell membrane. With respect to regulation, binding of glutamate or asparatate induces a higher thermal stability of the protein structure. Its function is as follows. Part of the ABC transporter complex GluABCD involved in glutamate uptake. Binds glutamate with a high affinity. Also binds aspartate with high affinity, suggesting that GluB could be involved in the transport of both amino acid residues into the cell. The sequence is that of Glutamate-binding protein GluB from Corynebacterium glutamicum (strain ATCC 13032 / DSM 20300 / JCM 1318 / BCRC 11384 / CCUG 27702 / LMG 3730 / NBRC 12168 / NCIMB 10025 / NRRL B-2784 / 534).